The following is a 45-amino-acid chain: MEAALLLAKLPEAYQIFDPLVDVLPIIPVFFLLLAFVWQAAVGFR.

Positions 1–8 (MEAALLLA) are excised as a propeptide. Residues 24–44 (LPIIPVFFLLLAFVWQAAVGF) traverse the membrane as a helical segment.

It belongs to the PsbK family. PSII is composed of 1 copy each of membrane proteins PsbA, PsbB, PsbC, PsbD, PsbE, PsbF, PsbH, PsbI, PsbJ, PsbK, PsbL, PsbM, PsbT, PsbX, PsbY, PsbZ, Psb30/Ycf12, peripheral proteins PsbO, CyanoQ (PsbQ), PsbU, PsbV and a large number of cofactors. It forms dimeric complexes.

The protein localises to the cellular thylakoid membrane. Functionally, one of the components of the core complex of photosystem II (PSII). PSII is a light-driven water:plastoquinone oxidoreductase that uses light energy to abstract electrons from H(2)O, generating O(2) and a proton gradient subsequently used for ATP formation. It consists of a core antenna complex that captures photons, and an electron transfer chain that converts photonic excitation into a charge separation. This chain is Photosystem II reaction center protein K, found in Nostoc sp. (strain PCC 7120 / SAG 25.82 / UTEX 2576).